Reading from the N-terminus, the 328-residue chain is Phosphate acyltransferase (328 aa).

Belongs to the PlsX family. Homodimer. Probably interacts with PlsY.

The protein localises to the cytoplasm. It carries out the reaction a fatty acyl-[ACP] + phosphate = an acyl phosphate + holo-[ACP]. It functions in the pathway lipid metabolism; phospholipid metabolism. In terms of biological role, catalyzes the reversible formation of acyl-phosphate (acyl-PO(4)) from acyl-[acyl-carrier-protein] (acyl-ACP). This enzyme utilizes acyl-ACP as fatty acyl donor, but not acyl-CoA. This chain is Phosphate acyltransferase, found in Staphylococcus aureus (strain bovine RF122 / ET3-1).